A 377-amino-acid chain; its full sequence is Cytochrome b (377 aa).

Helical transmembrane passes span 36–56 (WGSL…FLAM), 80–102 (WLIR…LHMA), 115–135 (VWLI…MGYI), and 181–201 (FFVL…IHLI). Positions 86 and 100 each coordinate heme b. Residues H185 and H199 each contribute to the heme b site. Residue H204 participates in a ubiquinone binding. A run of 4 helical transmembrane segments spans residues 227-247 (YSSK…VIIF), 291-311 (LGGV…PFIS), 326-346 (LFWS…MPVV), and 354-374 (LTST…FLMI).

Belongs to the cytochrome b family. In terms of assembly, the main subunits of complex b-c1 are: cytochrome b, cytochrome c1 and the Rieske protein. Requires heme b as cofactor.

The protein localises to the mitochondrion inner membrane. In terms of biological role, component of the ubiquinol-cytochrome c reductase complex (complex III or cytochrome b-c1 complex) that is part of the mitochondrial respiratory chain. The b-c1 complex mediates electron transfer from ubiquinol to cytochrome c. Contributes to the generation of a proton gradient across the mitochondrial membrane that is then used for ATP synthesis. The sequence is that of Cytochrome b (mt:Cyt-b) from Myzostoma seymourcollegiorum (Polychaete worm).